The sequence spans 118 residues: Ly-6/neurotoxin-like protein 1 (118 aa).

The first 22 residues, 1-22 (MTPLLTLFLVVLMGLPLAPVQA), serve as a signal peptide directing secretion. The 85-residue stretch at 23 to 107 (LDCHVCAYNG…LAIPATLALA (85 aa)) folds into the UPAR/Ly6 domain. Disulfide bonds link C25–C48, C28–C35, C41–C66, C70–C87, and C88–C93. S95 carries the GPI-anchor amidated serine lipid modification. Residues 96-118 (AGLAIPATLALAPVLLATLWGLL) constitute a propeptide, removed in mature form.

In terms of assembly, interacts with nAChRs containing alpha-4:beta-2 (CHRNA4:CHRNB2) and alpha-7 (CHRNA7) subunits. Interacts with CHRNA4 probably in the endoplasmic reticulum prior to nAChR pentameric assembly. Interacts with KCNA2/Potassium voltage-gated channel subfamily A member 2. As to expression, expressed in lung predominantly in airway epithelial cells, submucous glands, and smooth muscle cells, in endothelial and smooth muscle cells in vessel walls and in alveolar type II cells (at protein level). Also expressed in brain.

It localises to the cell membrane. Its subcellular location is the cell projection. The protein resides in the dendrite. The protein localises to the endoplasmic reticulum. Acts in different tissues through interaction to nicotinic acetylcholine receptors (nAChRs). The proposed role as modulator of nAChR activity seems to be dependent on the nAChR subtype and stoichiometry, and to involve an effect on nAChR trafficking and its cell surface expression, and on single channel properties of the nAChR inserted in the plasma membrane. Modulates functional properties of nicotinic acetylcholine receptors (nAChRs) to prevent excessive excitation, and hence neurodegeneration. Enhances desensitization by increasing both the rate and extent of desensitization of alpha-4:beta-2-containing nAChRs and slowing recovery from desensitization. Promotes large amplitude ACh-evoked currents through alpha-4:beta-2 nAChRs. Is involved in regulation of the nAChR pentameric assembly in the endoplasmic reticulum. Shifts stoichiometry from high sensitivity alpha-4(2):beta-2(3) to low sensitivity alpha-4(3):beta-2(2) nAChR. In vitro modulates alpha-3:beta-4-containing nAChRs. Reduces cell surface expression of (alpha-3:beta-4)(2):beta-4 and (alpha-3:beta-4)(2):alpha-5 nAChRs suggesting an interaction with nAChR alpha-3(-):(+)beta-4 subunit interfaces and an allosteric mode. Corresponding single channel effects characterized by decreased unitary conductance, altered burst proportions and enhanced desensitization/inactivation seem to depend on nAChR alpha:alpha subunit interfaces and are greater in (alpha-3:beta-2)(2):alpha-3 when compared to (alpha-3:beta-2)(2):alpha-5 nAChRs. Prevents plasticity in the primary visual cortex late in life. The sequence is that of Ly-6/neurotoxin-like protein 1 from Macaca mulatta (Rhesus macaque).